The primary structure comprises 376 residues: Erythronate-4-phosphate dehydrogenase (376 aa).

Substrate-binding residues include serine 45 and threonine 67. Aspartate 147 contributes to the NAD(+) binding site. Residue arginine 209 is part of the active site. Position 233 (aspartate 233) interacts with NAD(+). Glutamate 238 is a catalytic residue. The Proton donor role is filled by histidine 255. Glycine 258 is a binding site for NAD(+). Tyrosine 259 is a binding site for substrate.

The protein belongs to the D-isomer specific 2-hydroxyacid dehydrogenase family. PdxB subfamily. Homodimer.

Its subcellular location is the cytoplasm. The enzyme catalyses 4-phospho-D-erythronate + NAD(+) = (R)-3-hydroxy-2-oxo-4-phosphooxybutanoate + NADH + H(+). The protein operates within cofactor biosynthesis; pyridoxine 5'-phosphate biosynthesis; pyridoxine 5'-phosphate from D-erythrose 4-phosphate: step 2/5. Functionally, catalyzes the oxidation of erythronate-4-phosphate to 3-hydroxy-2-oxo-4-phosphonooxybutanoate. The protein is Erythronate-4-phosphate dehydrogenase of Shewanella baltica (strain OS223).